The chain runs to 262 residues: Glucosamine-6-phosphate deaminase (262 aa).

The Proton acceptor; for enolization step role is filled by Asp63. Catalysis depends on Asn129, which acts as the For ring-opening step. His131 (proton acceptor; for ring-opening step) is an active-site residue. Glu136 functions as the For ring-opening step in the catalytic mechanism.

Belongs to the glucosamine/galactosamine-6-phosphate isomerase family. NagB subfamily.

It catalyses the reaction alpha-D-glucosamine 6-phosphate + H2O = beta-D-fructose 6-phosphate + NH4(+). It functions in the pathway amino-sugar metabolism; N-acetylneuraminate degradation; D-fructose 6-phosphate from N-acetylneuraminate: step 5/5. Its function is as follows. Catalyzes the reversible isomerization-deamination of glucosamine 6-phosphate (GlcN6P) to form fructose 6-phosphate (Fru6P) and ammonium ion. This chain is Glucosamine-6-phosphate deaminase, found in Bacillus cereus (strain G9842).